Reading from the N-terminus, the 485-residue chain is Ulvan lyase (485 aa).

Residues methionine 1–glycine 33 form the signal peptide. Cysteine 34 carries N-palmitoyl cysteine lipidation. Cysteine 34 is lipidated: S-diacylglycerol cysteine. The substrate site is built by asparagine 64 and asparagine 126. Residues phenylalanine 108–glycine 128 form a disordered region. Basic and acidic residues predominate over residues leucine 115 to glycine 128. Histidine 127 (proton donor) is an active-site residue. The substrate site is built by lysine 129 and histidine 147. Catalysis depends on tyrosine 192, which acts as the Proton acceptor. Residues arginine 208, histidine 212, and tyrosine 250 each coordinate substrate. Histidine 212 is a Zn(2+) binding site. Zn(2+) is bound by residues histidine 268, cysteine 270, and histidine 282. Histidine 282 contributes to the substrate binding site.

This sequence belongs to the polysaccharide lyase 25 family.

The protein localises to the cell membrane. Its function is as follows. Ulvan lyase involved in ulvan degradation. Ulvan is the main polysaccharide component of the Ulvales (green seaweed) cell wall. It is composed of disaccharide building blocks comprising 3-sulfated rhamnose (Rha3S) linked to D-glucuronic acid (GlcA), L-iduronic acid (IduA), or D-xylose (Xyl). Ulvan lyase catalyzes the endolytic cleavage of the glycosidic bond between Rha3S and the uronic acids GlcA or IduA, producing oligosaccharides that have unsaturated 4-deoxy-L-threo-hex-4-enopyranosiduronic acid (deltaUA) at the non-reducing end. This results eventually in the degradation of the ulvan polysaccharide into deltaUA-Rha3S disaccharides and deltaUA-Rha3S-Xyl-Rha3S tetrasaccharides. This Alteromonas sp. (strain LOR) protein is Ulvan lyase.